The sequence spans 130 residues: Methylglyoxal synthase (130 aa).

Residues 1–130 (MSKPRIALIA…DLARNMQDVC (130 aa)) form the MGS-like domain. Residues His-11, Lys-15, 37-40 (TGTT), and 57-58 (SG) each bind substrate. The active-site Proton donor/acceptor is Asp-63. Position 90 (His-90) interacts with substrate.

The protein belongs to the methylglyoxal synthase family.

The enzyme catalyses dihydroxyacetone phosphate = methylglyoxal + phosphate. Catalyzes the formation of methylglyoxal from dihydroxyacetone phosphate. In Burkholderia vietnamiensis (strain G4 / LMG 22486) (Burkholderia cepacia (strain R1808)), this protein is Methylglyoxal synthase.